We begin with the raw amino-acid sequence, 417 residues long: Peptidyl-Asp metalloendopeptidase (417 aa).

Residues 1-25 (MLSRSIGKAAGGLVLGLSVAAAAHA) form the signal peptide. H327 is a Zn(2+) binding site. Residue E328 is part of the active site. 2 residues coordinate Zn(2+): H331 and H337.

Belongs to the peptidase M72 family. Zn(2+) is required as a cofactor.

It carries out the reaction Cleavage of Xaa-|-Asp, Xaa-|-Glu and Xaa-|-cysteic acid bonds.. In terms of biological role, metalloprotease, specifically cleaves on the N-terminal side of aspartyl, glutamyl and cysteic acid residues. This chain is Peptidyl-Asp metalloendopeptidase, found in Stenotrophomonas maltophilia (strain R551-3).